We begin with the raw amino-acid sequence, 439 residues long: MQPATRSIAVAGPASAALRTATTPFICLGCRSVQRKQQRRLFSSTVSTQTDLRAGLTKLTSRRLISVSGPDASKFLQGVITNNINAPHNANGFYTGFLTAQGRVVHDVIIYPDDLGPEPGKQSFLIEVDADEAATLHKHIKRYKLRSKFNLKLLDPEERALYHSWNDVDQAGPWTKLIDEVQNAGNARAVPDPRVPAFGSRVVVNQTSSSSPLTDGDLTPESSYHLRRFLLGIPEGQSEIISGTALPLESNMDVMNGIDFRKGCYVGQELTIRTKHRGVVRKRILPCILYYEGAAPEIPADGPGQLEALEKLLKPEVEQGVKAEMIPQGASIDKVDKKSRSAPGKWLRGIGNVGLALCRLEVMTDTVLPGETPGTYSPEQDFVVSLGGEEGSEVEAKKVKVKAFVPFWLKDVWRIEAEKAEEERRMREELLRDRGLDVE.

The N-terminal 72 residues, M1–A72, are a transit peptide targeting the mitochondrion.

Belongs to the GcvT family. CAF17/IBA57 subfamily.

Its subcellular location is the mitochondrion matrix. This is Iron-sulfur cluster assembly factor IBA57 homolog, mitochondrial (caf-17) from Neurospora crassa (strain ATCC 24698 / 74-OR23-1A / CBS 708.71 / DSM 1257 / FGSC 987).